A 248-amino-acid polypeptide reads, in one-letter code: Uridylate kinase (248 aa).

13–16 (KLSG) provides a ligand contact to ATP. G55 is a UMP binding site. 2 residues coordinate ATP: G56 and R60. UMP contacts are provided by residues D75 and 136–143 (TGNPYFTT). ATP is bound by residues T163, Y169, and D172.

Belongs to the UMP kinase family. In terms of assembly, homohexamer.

It is found in the cytoplasm. The enzyme catalyses UMP + ATP = UDP + ADP. Its pathway is pyrimidine metabolism; CTP biosynthesis via de novo pathway; UDP from UMP (UMPK route): step 1/1. Inhibited by UTP. Its function is as follows. Catalyzes the reversible phosphorylation of UMP to UDP. The protein is Uridylate kinase of Leptospira interrogans serogroup Icterohaemorrhagiae serovar copenhageni (strain Fiocruz L1-130).